The following is a 157-amino-acid chain: Small ribosomal subunit protein uS7 (157 aa).

This sequence belongs to the universal ribosomal protein uS7 family. As to quaternary structure, part of the 30S ribosomal subunit. Contacts proteins S9 and S11.

Functionally, one of the primary rRNA binding proteins, it binds directly to 16S rRNA where it nucleates assembly of the head domain of the 30S subunit. Is located at the subunit interface close to the decoding center, probably blocks exit of the E-site tRNA. The sequence is that of Small ribosomal subunit protein uS7 from Borrelia hermsii (strain HS1 / DAH).